The chain runs to 350 residues: 3-isopropylmalate dehydrogenase (350 aa).

Residue Gly76–Glu87 coordinates NAD(+). Arg94, Arg104, Arg132, and Asp217 together coordinate substrate. Mg(2+) contacts are provided by Asp217, Asp241, and Asp245. NAD(+) is bound at residue Gly275–Asn287.

Belongs to the isocitrate and isopropylmalate dehydrogenases family. LeuB type 1 subfamily. In terms of assembly, homodimer. Mg(2+) serves as cofactor. Mn(2+) is required as a cofactor.

It localises to the cytoplasm. The catalysed reaction is (2R,3S)-3-isopropylmalate + NAD(+) = 4-methyl-2-oxopentanoate + CO2 + NADH. Its pathway is amino-acid biosynthesis; L-leucine biosynthesis; L-leucine from 3-methyl-2-oxobutanoate: step 3/4. Functionally, catalyzes the oxidation of 3-carboxy-2-hydroxy-4-methylpentanoate (3-isopropylmalate) to 3-carboxy-4-methyl-2-oxopentanoate. The product decarboxylates to 4-methyl-2 oxopentanoate. In Listeria monocytogenes serovar 1/2a (strain ATCC BAA-679 / EGD-e), this protein is 3-isopropylmalate dehydrogenase.